A 76-amino-acid polypeptide reads, in one-letter code: uncharacterized protein (76 aa).

Transmembrane regions (helical) follow at residues 16–33 (FAFTLLAVSTFLYIGAVL) and 45–61 (TMFLADCVFLAGAFFCA).

The protein resides in the cell membrane. This is an uncharacterized protein from Bacillus subtilis (strain 168).